The following is a 261-amino-acid chain: Maspardin (261 aa).

The region spanning 87 to 159 (FCDGFRKLLD…NSFWLMPAFM (73 aa)) is the AB hydrolase-1 domain. Residue S257 is modified to Phosphoserine.

It belongs to the AB hydrolase superfamily. Interacts with CD4. Interacts with ALDH16A1.

The protein localises to the cytoplasm. In terms of biological role, may play a role as a negative regulatory factor in CD4-dependent T-cell activation. The sequence is that of Maspardin (Spg21) from Rattus norvegicus (Rat).